The primary structure comprises 127 residues: UPF0212 protein VNG_1264C (127 aa).

This sequence belongs to the UPF0212 family.

The polypeptide is UPF0212 protein VNG_1264C (Halobacterium salinarum (strain ATCC 700922 / JCM 11081 / NRC-1) (Halobacterium halobium)).